The sequence spans 412 residues: MRDETPAYLRARHYFYEILESQAQTSRMGVIVNRFIVFFIVLSVGITVMESVPAMREDYGRLFQALELLCLVMFSIEYYIRIWIAPEHLPYHHMSPLRAAWAYMISPQGIVDCISVMPLWIALFGPDDLRVLIILRMLRLLKFARYSSGMRSLLEVLESERRALMACLVILACATLVSATAMHIAEGHVQPEKFGTIPDAMWWAIVTLSTIGYGDVVPATGIGRMVASATIICGLIMIALPVGIVANAFSEVIHRRDFIVNWSMVARVPLFSHLTAGDIAHIMQLLQARQIERGEVVFRRGEPATAMYFIAEGDVEIELGPEDKGRRIRLGTGHFFGEIAVLKRVERSATVKAVSRTRLLVLDGADLRALIAREPSIARKINQIVEGRTGRNLNLEIADLEGQADVSVEENA.

Transmembrane regions (helical) follow at residues 35-55 (FIVF…VPAM), 65-85 (ALEL…IWIA), 164-184 (LMAC…AMHI), 202-222 (WWAI…ATGI), and 225-245 (MVAS…VGIV). The short motif at 210–215 (TIGYGD) is the Selectivity filter element. 270–388 (LFSHLTAGDI…RKINQIVEGR (119 aa)) is a binding site for a nucleoside 3',5'-cyclic phosphate.

It belongs to the potassium channel family.

The protein localises to the cell membrane. The sequence is that of Putative potassium channel protein RPA4233 from Rhodopseudomonas palustris (strain ATCC BAA-98 / CGA009).